A 914-amino-acid polypeptide reads, in one-letter code: Solute carrier family 12 member 9 (914 aa).

Over M1–K36 the chain is Cytoplasmic. S6 is subject to Phosphoserine. A helical membrane pass occupies residues L37–F57. Topologically, residues L58–A72 are extracellular. A helical membrane pass occupies residues L73–I93. Topologically, residues A94–S119 are cytoplasmic. The chain crosses the membrane as a helical span at residues I120–V140. The Extracellular segment spans residues E141–N167. A helical membrane pass occupies residues L168–L188. Topologically, residues Y189 to S193 are cytoplasmic. The chain crosses the membrane as a helical span at residues F194–V214. The Extracellular portion of the chain corresponds to G215–G262. 2 N-linked (GlcNAc...) asparagine glycosylation sites follow: N228 and N243. The helical transmembrane segment at A263–A283 threads the bilayer. The Cytoplasmic segment spans residues G284 to A297. A helical membrane pass occupies residues I298–F318. The Extracellular segment spans residues L319 to A338. Residues I339 to M359 traverse the membrane as a helical segment. The Cytoplasmic segment spans residues S360–R390. The chain crosses the membrane as a helical span at residues G391–A411. At G412–T416 the chain is on the extracellular side. The helical transmembrane segment at L417–L437 threads the bilayer. Residues S438–C466 lie on the Cytoplasmic side of the membrane. The helical transmembrane segment at L467–L487 threads the bilayer. The Extracellular portion of the chain corresponds to L488–Y740. Positions L642–L678 are disordered. Residues V741 to W761 form a helical membrane-spanning segment. Residues H762–L914 are Cytoplasmic-facing. The tract at residues Q844–G863 is disordered. Gly residues predominate over residues R847–G858.

It belongs to the SLC12A transporter family. As to quaternary structure, interacts with SLC12A1. In terms of tissue distribution, highly expressed in placenta, brain and kidney. Lower expression in lung, liver and heart.

Its subcellular location is the cell membrane. The protein resides in the lysosome membrane. Functionally, may be an inhibitor of SLC12A1. Seems to correspond to a subunit of a multimeric transport system and thus, additional subunits may be required for its function. May play a role in lysosomal ion flux and osmoregulation. In Homo sapiens (Human), this protein is Solute carrier family 12 member 9 (SLC12A9).